The following is a 289-amino-acid chain: Putative 2-aminoethylphosphonate transport system permease protein PhnU (289 aa).

Transmembrane regions (helical) follow at residues 19–39 (WLLL…SLIV), 76–96 (FFAT…LVFI), 111–131 (FIAL…GSAG), 150–170 (FLYS…PLVM), 202–222 (VIFP…LLLT), and 254–274 (YTVA…LFSL). The ABC transmembrane type-1 domain occupies 68-275 (LLNTLQIAFF…VLSLGLFSLY (208 aa)).

This sequence belongs to the binding-protein-dependent transport system permease family.

It localises to the cell inner membrane. Its function is as follows. Probably part of the PhnSTUV complex (TC 3.A.1.11.5) involved in 2-aminoethylphosphonate import. Probably responsible for the translocation of the substrate across the membrane. This chain is Putative 2-aminoethylphosphonate transport system permease protein PhnU (phnU), found in Salmonella typhi.